Reading from the N-terminus, the 226-residue chain is Leucyl/phenylalanyl-tRNA--protein transferase (226 aa).

It belongs to the L/F-transferase family.

Its subcellular location is the cytoplasm. It carries out the reaction N-terminal L-lysyl-[protein] + L-leucyl-tRNA(Leu) = N-terminal L-leucyl-L-lysyl-[protein] + tRNA(Leu) + H(+). The catalysed reaction is N-terminal L-arginyl-[protein] + L-leucyl-tRNA(Leu) = N-terminal L-leucyl-L-arginyl-[protein] + tRNA(Leu) + H(+). It catalyses the reaction L-phenylalanyl-tRNA(Phe) + an N-terminal L-alpha-aminoacyl-[protein] = an N-terminal L-phenylalanyl-L-alpha-aminoacyl-[protein] + tRNA(Phe). Its function is as follows. Functions in the N-end rule pathway of protein degradation where it conjugates Leu, Phe and, less efficiently, Met from aminoacyl-tRNAs to the N-termini of proteins containing an N-terminal arginine or lysine. The polypeptide is Leucyl/phenylalanyl-tRNA--protein transferase (Pseudomonas fluorescens (strain ATCC BAA-477 / NRRL B-23932 / Pf-5)).